Consider the following 262-residue polypeptide: ATP synthase subunit a (262 aa).

6 helical membrane passes run 24-44, 84-104, 129-149, 165-185, 194-214, and 228-248; these read AVHL…LFVF, VIAP…AIDL, DISA…FYTV, PFNH…TLLA, LFGN…MYMA, and LVWA…FMML.

Belongs to the ATPase A chain family. F-type ATPases have 2 components, CF(1) - the catalytic core - and CF(0) - the membrane proton channel. CF(1) has five subunits: alpha(3), beta(3), gamma(1), delta(1), epsilon(1). CF(0) has three main subunits: a(1), b(2) and c(9-12). The alpha and beta chains form an alternating ring which encloses part of the gamma chain. CF(1) is attached to CF(0) by a central stalk formed by the gamma and epsilon chains, while a peripheral stalk is formed by the delta and b chains.

It is found in the cell inner membrane. In terms of biological role, key component of the proton channel; it plays a direct role in the translocation of protons across the membrane. The sequence is that of ATP synthase subunit a from Actinobacillus pleuropneumoniae serotype 7 (strain AP76).